A 390-amino-acid polypeptide reads, in one-letter code: Transforming growth factor beta-1 proprotein (390 aa).

Positions 1–29 (MPPSGLRLLPLLLPLLWLLMLTPGRPVAG) are cleaved as a signal peptide. The interval 30–74 (LSTCKTIDMELVKRKGIEAIRGQILSKLRLASPPSQGDVPPGPLP) is straightjacket domain. The interval 75–271 (EAILALYNST…ATPLERAQHL (197 aa)) is arm domain. 3 N-linked (GlcNAc...) asparagine glycosylation sites follow: asparagine 82, asparagine 136, and asparagine 176. The interval 226–252 (DSKDNTLQVDINGFSSGRRGDLATIHG) is bowtie tail. The Cell attachment site signature appears at 244 to 246 (RGD). Disulfide bonds link cysteine 285/cysteine 294, cysteine 293/cysteine 356, cysteine 322/cysteine 387, and cysteine 326/cysteine 389.

This sequence belongs to the TGF-beta family. Homodimer; disulfide-linked. Interacts with the serine proteases, HTRA1 and HTRA3: the interaction with either inhibits TGFB1-mediated signaling and the HTRA protease activity is required for this inhibition. May interact with THSD4; this interaction may lead to sequestration by FBN1 microfibril assembly and attenuation of TGFB signaling. Interacts with CD109, DPT and ASPN. Interacts with EFEMP2. Interacts with TSKU; the interaction contributes to regulation of the hair cycle. Interacts with TGFBR3. In terms of assembly, homodimer; disulfide-linked. Interacts with transforming growth factor beta-1 (TGF-beta-1) chain; interaction is non-covalent and maintains TGF-beta-1 in a latent state; each latency-associated peptide (LAP) monomer interacts with TGF-beta-1 in the other monomer. Interacts with LTBP1; leading to regulation of TGF-beta-1 activation. Interacts with LRRC32/GARP; leading to regulation of TGF-beta-1 activation on the surface of activated regulatory T-cells (Tregs). Interacts with LRRC33/NRROS; leading to regulation of TGF-beta-1 activation in macrophages and microglia. Interacts (via cell attachment site) with integrins ITGAV and ITGB6 (ITGAV:ITGB6), leading to release of the active TGF-beta-1. Interacts with NREP; the interaction results in a decrease in TGFB1 autoinduction. Interacts with HSP90AB1; inhibits latent TGFB1 activation. As to quaternary structure, homodimer; disulfide-linked. Interacts with TGF-beta receptors (TGFBR1 and TGFBR2), leading to signal transduction. In terms of processing, transforming growth factor beta-1 proprotein: The precursor proprotein is cleaved in the Golgi apparatus by FURIN to form Transforming growth factor beta-1 (TGF-beta-1) and Latency-associated peptide (LAP) chains, which remain non-covalently linked, rendering TGF-beta-1 inactive. Post-translationally, N-glycosylated. Deglycosylation leads to activation of Transforming growth factor beta-1 (TGF-beta-1); mechanisms triggering deglycosylation-driven activation of TGF-beta-1 are however unclear.

Its subcellular location is the secreted. It is found in the extracellular space. The protein localises to the extracellular matrix. Functionally, transforming growth factor beta-1 proprotein: Precursor of the Latency-associated peptide (LAP) and Transforming growth factor beta-1 (TGF-beta-1) chains, which constitute the regulatory and active subunit of TGF-beta-1, respectively. Its function is as follows. Required to maintain the Transforming growth factor beta-1 (TGF-beta-1) chain in a latent state during storage in extracellular matrix. Associates non-covalently with TGF-beta-1 and regulates its activation via interaction with 'milieu molecules', such as LTBP1, LRRC32/GARP and LRRC33/NRROS, that control activation of TGF-beta-1. Interaction with LRRC33/NRROS regulates activation of TGF-beta-1 in macrophages and microglia. Interaction with LRRC32/GARP controls activation of TGF-beta-1 on the surface of activated regulatory T-cells (Tregs). Interaction with integrins (ITGAV:ITGB6 or ITGAV:ITGB8) results in distortion of the Latency-associated peptide chain and subsequent release of the active TGF-beta-1. In terms of biological role, multifunctional protein that regulates the growth and differentiation of various cell types and is involved in various processes, such as normal development, immune function, microglia function and responses to neurodegeneration. Activation into mature form follows different steps: following cleavage of the proprotein in the Golgi apparatus, Latency-associated peptide (LAP) and Transforming growth factor beta-1 (TGF-beta-1) chains remain non-covalently linked rendering TGF-beta-1 inactive during storage in extracellular matrix. At the same time, LAP chain interacts with 'milieu molecules', such as LTBP1, LRRC32/GARP and LRRC33/NRROS that control activation of TGF-beta-1 and maintain it in a latent state during storage in extracellular milieus. TGF-beta-1 is released from LAP by integrins (ITGAV:ITGB6 or ITGAV:ITGB8): integrin-binding to LAP stabilizes an alternative conformation of the LAP bowtie tail and results in distortion of the LAP chain and subsequent release of the active TGF-beta-1. Once activated following release of LAP, TGF-beta-1 acts by binding to TGF-beta receptors (TGFBR1 and TGFBR2), which transduce signal. While expressed by many cells types, TGF-beta-1 only has a very localized range of action within cell environment thanks to fine regulation of its activation by Latency-associated peptide chain (LAP) and 'milieu molecules'. Plays an important role in bone remodeling: acts as a potent stimulator of osteoblastic bone formation, causing chemotaxis, proliferation and differentiation in committed osteoblasts. Can promote either T-helper 17 cells (Th17) or regulatory T-cells (Treg) lineage differentiation in a concentration-dependent manner. At high concentrations, leads to FOXP3-mediated suppression of RORC and down-regulation of IL-17 expression, favoring Treg cell development. At low concentrations in concert with IL-6 and IL-21, leads to expression of the IL-17 and IL-23 receptors, favoring differentiation to Th17 cells. Stimulates sustained production of collagen through the activation of CREB3L1 by regulated intramembrane proteolysis (RIP). Mediates SMAD2/3 activation by inducing its phosphorylation and subsequent translocation to the nucleus. Positively regulates odontoblastic differentiation in dental papilla cells, via promotion of IPO7-mediated translocation of phosphorylated SMAD2 to the nucleus and subsequent transcription of target genes. Can induce epithelial-to-mesenchymal transition (EMT) and cell migration in various cell types. The chain is Transforming growth factor beta-1 proprotein (TGFB1) from Ovis aries (Sheep).